A 355-amino-acid polypeptide reads, in one-letter code: Uroporphyrinogen decarboxylase (355 aa).

Substrate is bound by residues 27–31 (RQAGR), Asp77, Tyr154, Thr209, and His327.

This sequence belongs to the uroporphyrinogen decarboxylase family. In terms of assembly, homodimer.

The protein localises to the cytoplasm. It carries out the reaction uroporphyrinogen III + 4 H(+) = coproporphyrinogen III + 4 CO2. Its pathway is porphyrin-containing compound metabolism; protoporphyrin-IX biosynthesis; coproporphyrinogen-III from 5-aminolevulinate: step 4/4. Its function is as follows. Catalyzes the decarboxylation of four acetate groups of uroporphyrinogen-III to yield coproporphyrinogen-III. The polypeptide is Uroporphyrinogen decarboxylase (Erwinia tasmaniensis (strain DSM 17950 / CFBP 7177 / CIP 109463 / NCPPB 4357 / Et1/99)).